The primary structure comprises 248 residues: 2,3-bisphosphoglycerate-dependent phosphoglycerate mutase (248 aa).

Substrate contacts are provided by residues 8–15 (RHGESEWN), 21–22 (TG), Arg-60, 87–90 (ERHY), Lys-98, 114–115 (RR), and 183–184 (GN). The active-site Tele-phosphohistidine intermediate is His-9. Catalysis depends on Glu-87, which acts as the Proton donor/acceptor.

It belongs to the phosphoglycerate mutase family. BPG-dependent PGAM subfamily.

It carries out the reaction (2R)-2-phosphoglycerate = (2R)-3-phosphoglycerate. It participates in carbohydrate degradation; glycolysis; pyruvate from D-glyceraldehyde 3-phosphate: step 3/5. Its function is as follows. Catalyzes the interconversion of 2-phosphoglycerate and 3-phosphoglycerate. The protein is 2,3-bisphosphoglycerate-dependent phosphoglycerate mutase of Borreliella afzelii (strain PKo) (Borrelia afzelii).